Here is a 374-residue protein sequence, read N- to C-terminus: Pulmonary surfactant-associated protein D (374 aa).

Residues 1-19 (MLPFLSMLVLLVQPLGNLG) form the signal peptide. 2 positions are modified to S-nitrosocysteine: Cys34 and Cys39. The interval 38 to 222 (MCSPTENGLP…GIKGESGLPD (185 aa)) is disordered. The 177-residue stretch at 45–221 (GLPGRDGRDG…RGIKGESGLP (177 aa)) folds into the Collagen-like domain. A compositionally biased stretch (basic and acidic residues) spans 49–64 (RDGRDGREGPRGEKGD). Residues 70 to 79 (PMGLSGLQGP) show a composition bias toward low complexity. Asn89 carries an N-linked (GlcNAc...) asparagine glycan. Low complexity-rich tracts occupy residues 137-149 (KGEA…VGAP) and 169-200 (APGV…RGPP). The span at 203–215 (KGDRGVPGDRGIK) shows a compositional bias: basic and acidic residues. A coiled-coil region spans residues 222–253 (DSAALRQQMEALKGKLQRLEVAFSHYQKAALF). Residues 259–374 (VGDKIFRTAD…GEQRLVICEF (116 aa)) form the C-type lectin domain. Disulfide bonds link Cys280–Cys372 and Cys350–Cys364.

The protein belongs to the SFTPD family. In terms of assembly, oligomeric complex of 4 set of homotrimers. S-nitrosylation at Cys-34 and Cys-39 alters the quaternary structure which results in a pro-inflammatory chemoattractive signaling activity with macrophages.

The protein resides in the secreted. It localises to the extracellular space. The protein localises to the extracellular matrix. It is found in the surface film. In terms of biological role, contributes to the lung's defense against inhaled microorganisms, organic antigens and toxins. Interacts with compounds such as bacterial lipopolysaccharides, oligosaccharides and fatty acids and modulates leukocyte action in immune response. May participate in the extracellular reorganization or turnover of pulmonary surfactant. Binds strongly maltose residues and to a lesser extent other alpha-glucosyl moieties. The sequence is that of Pulmonary surfactant-associated protein D (Sftpd) from Mus musculus (Mouse).